Reading from the N-terminus, the 696-residue chain is DNA ligase (696 aa).

Residues 36-40 (DAEYD), 85-86 (SL), and Glu123 contribute to the NAD(+) site. The N6-AMP-lysine intermediate role is filled by Lys125. Residues Arg146, Glu181, Lys319, and Lys343 each contribute to the NAD(+) site. Cys437, Cys440, Cys455, and Cys461 together coordinate Zn(2+). The BRCT domain maps to 618–696 (PEGTSLAGKT…EDGLKALLGL (79 aa)).

The protein belongs to the NAD-dependent DNA ligase family. LigA subfamily. Mg(2+) is required as a cofactor. Mn(2+) serves as cofactor.

The catalysed reaction is NAD(+) + (deoxyribonucleotide)n-3'-hydroxyl + 5'-phospho-(deoxyribonucleotide)m = (deoxyribonucleotide)n+m + AMP + beta-nicotinamide D-nucleotide.. Functionally, DNA ligase that catalyzes the formation of phosphodiester linkages between 5'-phosphoryl and 3'-hydroxyl groups in double-stranded DNA using NAD as a coenzyme and as the energy source for the reaction. It is essential for DNA replication and repair of damaged DNA. This chain is DNA ligase, found in Bordetella parapertussis (strain 12822 / ATCC BAA-587 / NCTC 13253).